The sequence spans 1284 residues: Putative late blight resistance protein homolog R1B-16 (1284 aa).

Residues 533–555 (PRMNEEIVGFKDVIENLRNQLLN) are a coiled coil. The NB-ARC domain occupies 534-821 (RMNEEIVGFK…SESFIKSSEG (288 aa)). 567 to 574 (GMPGLGKT) is an ATP binding site. 8 LRR repeats span residues 942–966 (FKFLKVLDLEHQVVIDSIPTELFYL), 985–1010 (LWNLETLILKHVSRCTVLLPSTVWDM), 1013–1036 (LRHLHIPNFRPENEEALLENSAKL), 1085–1107 (PIRLEILKLYRSKAFNTIPFCIS), 1108–1135 (APNLKYLKLSRSYMDSQYLSETADHLKN), 1159–1181 (FPQLKILKLEYLALMKWIVADDA), 1182–1206 (FPNLEQLVLHECRHLMEIPSCFMDI), and 1219–1243 (ESVVKSAMNIQETQVEDYQNTNFKL). An HMA domain is found at 1217–1284 (CNESVVKSAM…VEKQRKRGML (68 aa)).

This sequence belongs to the disease resistance NB-LRR family.

It localises to the cytoplasm. It is found in the membrane. Confers resistance to late blight (Phytophthora infestans) races carrying the avirulence gene Avr1. Resistance proteins guard the plant against pathogens that contain an appropriate avirulence protein via an indirect interaction with this avirulence protein. That triggers a defense system including the hypersensitive response, which restricts the pathogen growth. The sequence is that of Putative late blight resistance protein homolog R1B-16 (R1B-16) from Solanum demissum (Wild potato).